The sequence spans 142 residues: Group IIE secretory phospholipase A2 (142 aa).

A signal peptide spans 1 to 19 (MKPPIALACLCLLVPLAGG). Residues D41, G43, Y45, G47, and G49 each coordinate Ca(2+). Intrachain disulfides connect C44-C135, C46-C62, C61-C115, C67-C142, C68-C108, C77-C101, and C95-C106. The active site involves H65. D66 serves as a coordination point for Ca(2+). D109 is an active-site residue. Ca(2+)-binding residues include Y130 and N132.

It belongs to the phospholipase A2 family. It depends on Ca(2+) as a cofactor. Highly expressed in skin and uterus, and at lower levels in various other tissues. Expressed in hair follicles, specifically localized in companion cells of the outer root sheath and cuticular cells of the inner root sheath in hair follicles during anagen. Expressed in white and brown adipose tissue.

Its subcellular location is the secreted. It is found in the cytoplasm. It carries out the reaction a 1,2-diacyl-sn-glycero-3-phosphoethanolamine + H2O = a 1-acyl-sn-glycero-3-phosphoethanolamine + a fatty acid + H(+). It catalyses the reaction 1-hexadecanoyl-2-(9Z-octadecenoyl)-sn-glycero-3-phosphoethanolamine + H2O = 1-hexadecanoyl-sn-glycero-3-phosphoethanolamine + (9Z)-octadecenoate + H(+). The catalysed reaction is 1-hexadecanoyl-2-(9Z,12Z-octadecadienoyl)-sn-glycero-3-phosphoethanolamine + H2O = 1-hexadecanoyl-sn-glycero-3-phosphoethanolamine + (9Z,12Z)-octadecadienoate + H(+). The enzyme catalyses 1-hexadecanoyl-2-(5Z,8Z,11Z,14Z-eicosatetraenoyl)-sn-glycero-3-phosphoethanolamine + H2O = 1-hexadecanoyl-sn-glycero-3-phosphoethanolamine + (5Z,8Z,11Z,14Z)-eicosatetraenoate + H(+). It carries out the reaction 1,2-dihexadecanoyl-sn-glycero-3-phospho-(1'-sn-glycerol) + H2O = 1-hexadecanoyl-sn-glycero-3-phospho-(1'-sn-glycerol) + hexadecanoate + H(+). It catalyses the reaction 1-hexadecanoyl-2-(9Z-octadecenoyl)-sn-glycero-3-phosphoglycerol + H2O = 1-hexadecanoyl-sn-glycero-3-phosphoglycerol + (9Z)-octadecenoate + H(+). The catalysed reaction is a 1,2-diacyl-sn-glycero-3-phosphocholine + H2O = a 1-acyl-sn-glycero-3-phosphocholine + a fatty acid + H(+). The enzyme catalyses 1,2-dihexadecanoyl-sn-glycero-3-phosphocholine + H2O = 1-hexadecanoyl-sn-glycero-3-phosphocholine + hexadecanoate + H(+). It carries out the reaction 1-hexadecanoyl-2-(9Z-octadecenoyl)-sn-glycero-3-phosphocholine + H2O = 1-hexadecanoyl-sn-glycero-3-phosphocholine + (9Z)-octadecenoate + H(+). It catalyses the reaction 1-hexadecanoyl-2-(9Z,12Z-octadecadienoyl)-sn-glycero-3-phosphocholine + H2O = (9Z,12Z)-octadecadienoate + 1-hexadecanoyl-sn-glycero-3-phosphocholine + H(+). The catalysed reaction is 1-hexadecanoyl-2-(4Z,7Z,10Z,13Z,16Z,19Z-docosahexaenoyl)-sn-glycero-3-phosphocholine + H2O = (4Z,7Z,10Z,13Z,16Z,19Z)-docosahexaenoate + 1-hexadecanoyl-sn-glycero-3-phosphocholine + H(+). Its function is as follows. Secretory calcium-dependent phospholipase A2 that primarily targets extracellular phospholipids. Hydrolyzes the ester bond of the fatty acyl group attached at sn-2 position of phospholipids (phospholipase A2 activity), releasing various unsaturated fatty acids including oleoate, linoleoate, arachidonate, docosahexaenoate and lysophosphatidylethanolamines in preference to lysophosphatidylcholines. In response to high-fat diet, hydrolyzes minor lipoprotein phospholipids including phosphatidylserines, phosphatidylinositols and phosphatidylglycerols, altering lipoprotein composition and fat storage in adipose tissue and liver. May act in an autocrine and paracrine manner. Contributes to lipid remodeling of cellular membranes and generation of lipid mediators involved in pathogen clearance. Cleaves sn-2 fatty acyl chains of phosphatidylglycerols and phosphatidylethanolamines, which are major components of membrane phospholipids in bacteria. Acts as a hair follicle phospholipase A2. Selectively releases lysophosphatidylethanolamines (LPE) and various unsaturated fatty acids in skin to regulate hair follicle homeostasis. May regulate the inflammatory response by releasing arachidonate, a precursor of prostaglandins and leukotrienes. Upon allergen exposure, may participate in allergic inflammatory response by enhancing leukotriene C4 synthesis and degranulation in mast cells. The chain is Group IIE secretory phospholipase A2 (Pla2g2e) from Mus musculus (Mouse).